A 304-amino-acid chain; its full sequence is Ribonuclease Z (304 aa).

Positions 63, 65, 67, 68, 143, 213, and 271 each coordinate Zn(2+). Aspartate 67 acts as the Proton acceptor in catalysis.

This sequence belongs to the RNase Z family. As to quaternary structure, homodimer. The cofactor is Zn(2+).

The enzyme catalyses Endonucleolytic cleavage of RNA, removing extra 3' nucleotides from tRNA precursor, generating 3' termini of tRNAs. A 3'-hydroxy group is left at the tRNA terminus and a 5'-phosphoryl group is left at the trailer molecule.. Its function is as follows. Zinc phosphodiesterase, which displays some tRNA 3'-processing endonuclease activity. Probably involved in tRNA maturation, by removing a 3'-trailer from precursor tRNA. This chain is Ribonuclease Z, found in Parabacteroides distasonis (strain ATCC 8503 / DSM 20701 / CIP 104284 / JCM 5825 / NCTC 11152).